The sequence spans 498 residues: ATP synthase subunit beta, chloroplastic (498 aa).

At T6 the chain carries Phosphothreonine. S13 carries the post-translational modification Phosphoserine. 172-179 (GGAGVGKT) contributes to the ATP binding site.

It belongs to the ATPase alpha/beta chains family. F-type ATPases have 2 components, CF(1) - the catalytic core - and CF(0) - the membrane proton channel. CF(1) has five subunits: alpha(3), beta(3), gamma(1), delta(1), epsilon(1). CF(0) has four main subunits: a(1), b(1), b'(1) and c(9-12).

It localises to the plastid. It is found in the chloroplast thylakoid membrane. The enzyme catalyses ATP + H2O + 4 H(+)(in) = ADP + phosphate + 5 H(+)(out). Functionally, produces ATP from ADP in the presence of a proton gradient across the membrane. The catalytic sites are hosted primarily by the beta subunits. This is ATP synthase subunit beta, chloroplastic from Raphanus sativus (Radish).